The following is a 195-amino-acid chain: MSRLATVQRTTTETDIEIRLNLDQPEFEAPATGHGFLDHMLDALARHSRLGLSVRASGDLHIEPHHLIEDAGITLGQALTQALGDRRGIERYGSAFVPMDETLAHVVVDLSGRAHLAFEPETLDVWGQAGGMTHYHLREFLRGLCNHGGVTMHVRLLAGREAHHVIEAIVKALARALRDAVALTSDQLPSTKGSL.

This sequence belongs to the imidazoleglycerol-phosphate dehydratase family.

The protein resides in the cytoplasm. It catalyses the reaction D-erythro-1-(imidazol-4-yl)glycerol 3-phosphate = 3-(imidazol-4-yl)-2-oxopropyl phosphate + H2O. It participates in amino-acid biosynthesis; L-histidine biosynthesis; L-histidine from 5-phospho-alpha-D-ribose 1-diphosphate: step 6/9. This is Imidazoleglycerol-phosphate dehydratase from Deinococcus deserti (strain DSM 17065 / CIP 109153 / LMG 22923 / VCD115).